A 626-amino-acid chain; its full sequence is UvrABC system protein C (626 aa).

The GIY-YIG domain maps to 26–105; that stretch reads QEPGVYFMGD…IKQHQPHFNV (80 aa). One can recognise a UVR domain in the interval 215–250; that stretch reads QELHQLLTQQMEKAAADLKFEQAALIRDQINSLGKL.

The protein belongs to the UvrC family. As to quaternary structure, interacts with UvrB in an incision complex.

Its subcellular location is the cytoplasm. Functionally, the UvrABC repair system catalyzes the recognition and processing of DNA lesions. UvrC both incises the 5' and 3' sides of the lesion. The N-terminal half is responsible for the 3' incision and the C-terminal half is responsible for the 5' incision. This Synechocystis sp. (strain ATCC 27184 / PCC 6803 / Kazusa) protein is UvrABC system protein C.